The sequence spans 161 residues: Protein yippee-like B0546.4 (161 aa).

The Yippee domain occupies 14–111 (SLYGCVVCNT…IENANFEKIA (98 aa)). Zn(2+) contacts are provided by cysteine 18, cysteine 21, cysteine 74, and cysteine 77. The segment at 117–161 (PLGEDRQEAPPAPNLEMSRYPLEAEKKSRPQYRTVSVSSSSSAEC) is disordered. Over residues 151–161 (VSVSSSSSAEC) the composition is skewed to low complexity.

It belongs to the yippee family.

This chain is Protein yippee-like B0546.4, found in Caenorhabditis elegans.